Consider the following 454-residue polypeptide: MSTTDTIVAQATPPGRGGVGILRVSGRAASEVAHAVLGKLPKPRYADYLPFKDVDGSTLDQGIALYFPGPNSFTGEDVLELQGHGGPVILDLLLKRILALPGLRIARPGEFSERAFLNDKLDLAQAEAIADLIDASSEQAARSAVNSLQGAFSARIHQLVEALTHLRIYVEAAIDFPDEEIDFLSDGKIEGQLNGVMADLEQVRTEARQGSLLREGMKVVIAGRPNAGKSSLLNALAGREAAIVTDIAGTTRDVLREHIHIDGMPLHIIDTAGLREANDEVERIGIERAWNEIEQADRVLFMVDGTTTDATEPAAIWPEFMARLPATLPITVVRNKADITGETLGLTKVNGHSLIRLSARTGEGIDLLRDHLKQSMGFTSNTEGGFLARRRHLQALETAARHLVQGHEQLVSAYAGELLAEELRLAQQSLSEITGEFSSDDLLGRIFSSFCIGK.

R23, E80, and K120 together coordinate (6S)-5-formyl-5,6,7,8-tetrahydrofolate. In terms of domain architecture, TrmE-type G spans 216-377 (GMKVVIAGRP…LRDHLKQSMG (162 aa)). Residue N226 participates in K(+) binding. Residues 226–231 (NAGKSS), 245–251 (TDIAGTT), 270–273 (DTAG), 335–338 (NKAD), and 358–360 (SAR) each bind GTP. S230 lines the Mg(2+) pocket. K(+) is bound by residues T245, I247, and T250. Residue T251 coordinates Mg(2+). A (6S)-5-formyl-5,6,7,8-tetrahydrofolate-binding site is contributed by K454.

It belongs to the TRAFAC class TrmE-Era-EngA-EngB-Septin-like GTPase superfamily. TrmE GTPase family. In terms of assembly, homodimer. Heterotetramer of two MnmE and two MnmG subunits. It depends on K(+) as a cofactor.

The protein localises to the cytoplasm. Functionally, exhibits a very high intrinsic GTPase hydrolysis rate. Involved in the addition of a carboxymethylaminomethyl (cmnm) group at the wobble position (U34) of certain tRNAs, forming tRNA-cmnm(5)s(2)U34. This chain is tRNA modification GTPase MnmE, found in Yersinia pseudotuberculosis serotype IB (strain PB1/+).